A 351-amino-acid chain; its full sequence is Protein Wnt-4 (351 aa).

The first 22 residues, 1–22 (MTPEYFLRSLLMMILAVFSANA), serve as a signal peptide directing secretion. 11 disulfide bridges follow: C78–C89, C128–C136, C138–C155, C206–C220, C208–C215, C280–C311, C296–C306, C310–C350, C326–C341, C328–C338, and C333–C334. The N-linked (GlcNAc...) asparagine glycan is linked to N88. S212 is lipidated: O-palmitoleoyl serine; by PORCN. The N-linked (GlcNAc...) asparagine glycan is linked to N297.

The protein belongs to the Wnt family. Palmitoleoylation is required for efficient binding to frizzled receptors. Depalmitoleoylation leads to Wnt signaling pathway inhibition. In terms of tissue distribution, expressed in the brain and floor plate. In the developing pronephros, expressed in the proximal tubules and nephrostomes but absent from the pronephric duct.

Its subcellular location is the secreted. It is found in the extracellular space. The protein localises to the extracellular matrix. Functionally, ligand for members of the frizzled family of seven transmembrane receptors. Plays an important role in embryonic kidney development. Acts downstream of Notch signaling during pronephric kidney development. During early pronephros development, patterns the proximal pronephric anlagen to promote glomus and nephrostome formation. Also required later in pronephros development for tubulogenesis. This chain is Protein Wnt-4 (wnt4), found in Xenopus laevis (African clawed frog).